A 67-amino-acid chain; its full sequence is Medusin-PT (67 aa).

The first 22 residues, 1 to 22 (MAFLKKSLFLVFFLGFVSLSIC), serve as a signal peptide directing secretion. The propeptide occupies 23–48 (EEEKRETDEKENEQEDDREERSEEKR). Residues 25–46 (EKRETDEKENEQEDDREERSEE) are disordered. Acidic residues predominate over residues 31-40 (EKENEQEDDR). Leu66 is subject to Leucine amide.

This sequence belongs to the frog skin active peptide (FSAP) family. Medusin subfamily. In terms of processing, in the synthetic mutant medusin-PT1a [T58K], the Leu-50 has been modified in a D-amino acid. In medusin-PT1a, there is an increase in antimicrobial activity, and an increase in hemolytic activity. It is more potent against S.aureus and gains activity against MRSA, E.faecalis, E.coli, P.aeruginosa and C.albicans. There is an important increase in both biofilm inhibition and biofilm eradication. As to expression, expressed by the skin glands.

The protein localises to the secreted. It localises to the target cell membrane. Antimicrobial peptide with activity against Gram-positive bacteria S.epidermidis ATCC 12228 (MIC=50 uM) and S.aureus (MIC=64 ug/ml and MBC=128 ug/ml). Not active against some Gram-positive bacteria (methicillin-resistant S.aureus (MRSA), E.faecalis), Gram-negative bacterium E.coli ATCC 25922 and fungus C.albicans at concentrations up to 100 uM. Can only slightly inhibit the formation of biofilm by S.aureus (minimal biofilm inhibitionconcentration MBIC=512 ug/ml, minimal biofilm eradication concentration MBEC&gt;512 ug/ml). Has an anti-inflammatory effect, since it inhibits the production of the pro-inflammatory cytokines TNF-alpha and IL-1beta. Has high activity of stimulation of insulin release, which may protect the species from being eaten by predators by causing fatal hypoglycemia. Is not cytotoxic to cancer line cells. Shows very low hemolysis on horse erythrocytes and moderate hemolysis on mouse erythrocytes. The sequence is that of Medusin-PT from Phyllomedusa tarsius (Brownbelly leaf frog).